Consider the following 290-residue polypeptide: Ribosomal RNA small subunit methyltransferase A (290 aa).

S-adenosyl-L-methionine is bound by residues asparagine 27, leucine 29, glycine 54, glutamate 75, aspartate 100, and asparagine 125.

Belongs to the class I-like SAM-binding methyltransferase superfamily. rRNA adenine N(6)-methyltransferase family. RsmA subfamily.

It localises to the cytoplasm. It carries out the reaction adenosine(1518)/adenosine(1519) in 16S rRNA + 4 S-adenosyl-L-methionine = N(6)-dimethyladenosine(1518)/N(6)-dimethyladenosine(1519) in 16S rRNA + 4 S-adenosyl-L-homocysteine + 4 H(+). Specifically dimethylates two adjacent adenosines (A1518 and A1519) in the loop of a conserved hairpin near the 3'-end of 16S rRNA in the 30S particle. May play a critical role in biogenesis of 30S subunits. This chain is Ribosomal RNA small subunit methyltransferase A, found in Streptococcus pneumoniae (strain ATCC 700669 / Spain 23F-1).